Consider the following 666-residue polypeptide: DNA ligase (666 aa).

Residues 34–38 (DEEYD), 83–84 (SL), and Glu-114 contribute to the NAD(+) site. The N6-AMP-lysine intermediate role is filled by Lys-116. Residues Arg-137, Glu-174, Lys-290, and Lys-314 each contribute to the NAD(+) site. Zn(2+)-binding residues include Cys-408, Cys-411, Cys-424, and Cys-429. Residues 584-666 (SIEGPLKGLT…LKMVKREHNG (83 aa)) form the BRCT domain.

It belongs to the NAD-dependent DNA ligase family. LigA subfamily. Mg(2+) serves as cofactor. Mn(2+) is required as a cofactor.

The enzyme catalyses NAD(+) + (deoxyribonucleotide)n-3'-hydroxyl + 5'-phospho-(deoxyribonucleotide)m = (deoxyribonucleotide)n+m + AMP + beta-nicotinamide D-nucleotide.. In terms of biological role, DNA ligase that catalyzes the formation of phosphodiester linkages between 5'-phosphoryl and 3'-hydroxyl groups in double-stranded DNA using NAD as a coenzyme and as the energy source for the reaction. It is essential for DNA replication and repair of damaged DNA. This Coprothermobacter proteolyticus (strain ATCC 35245 / DSM 5265 / OCM 4 / BT) protein is DNA ligase.